We begin with the raw amino-acid sequence, 152 residues long: Large ribosomal subunit protein uL24 (152 aa).

Residues 128–152 (VVEEKETSKTSEGGGKTIEETEGEK) are disordered.

This sequence belongs to the universal ribosomal protein uL24 family. Part of the 50S ribosomal subunit.

Its function is as follows. One of two assembly initiator proteins, it binds directly to the 5'-end of the 23S rRNA, where it nucleates assembly of the 50S subunit. Functionally, located at the polypeptide exit tunnel on the outside of the subunit. The sequence is that of Large ribosomal subunit protein uL24 from Staphylothermus marinus (strain ATCC 43588 / DSM 3639 / JCM 9404 / F1).